Reading from the N-terminus, the 376-residue chain is Putative glutamate--cysteine ligase 2-3 (376 aa).

Belongs to the glutamate--cysteine ligase type 2 family. YbdK subfamily.

It carries out the reaction L-cysteine + L-glutamate + ATP = gamma-L-glutamyl-L-cysteine + ADP + phosphate + H(+). In terms of biological role, ATP-dependent carboxylate-amine ligase which exhibits weak glutamate--cysteine ligase activity. This Nocardioides sp. (strain ATCC BAA-499 / JS614) protein is Putative glutamate--cysteine ligase 2-3.